Consider the following 430-residue polypeptide: GTPase Obg (430 aa).

One can recognise an Obg domain in the interval 1-158 (MFVDQVKISL…LDVSLELKLL (158 aa)). Residues 118–145 (KGGRGGRGNSRFATPRNPAPDFSEKGEP) are disordered. Residues 159-329 (ADVGLVGFPS…LLYAIADKLE (171 aa)) form the OBG-type G domain. Residues 165 to 172 (GFPSVGKS), 190 to 194 (FTTIK), 212 to 215 (DLPG), 282 to 285 (NKMD), and 310 to 312 (STI) each bind GTP. 2 residues coordinate Mg(2+): S172 and T192. The OCT domain maps to 352–430 (KHTPSQDKFT…ILGGEFEFVE (79 aa)).

It belongs to the TRAFAC class OBG-HflX-like GTPase superfamily. OBG GTPase family. As to quaternary structure, monomer. Mg(2+) serves as cofactor.

The protein localises to the cytoplasm. Functionally, an essential GTPase which binds GTP, GDP and possibly (p)ppGpp with moderate affinity, with high nucleotide exchange rates and a fairly low GTP hydrolysis rate. Plays a role in control of the cell cycle, stress response, ribosome biogenesis and in those bacteria that undergo differentiation, in morphogenesis control. The sequence is that of GTPase Obg from Staphylococcus aureus (strain COL).